Here is a 163-residue protein sequence, read N- to C-terminus: Translation initiation factor IF-3-like (163 aa).

Belongs to the IF-3 family.

The sequence is that of Translation initiation factor IF-3-like from Nostoc sp. (strain PCC 7120 / SAG 25.82 / UTEX 2576).